We begin with the raw amino-acid sequence, 895 residues long: uncharacterized protein (895 aa).

NAD(+) is bound at residue 2–19; it reads NISVIGTGYVGLIQAVGL. The active site involves C261. Residues 468–614 enclose the DOD-type homing endonuclease domain; sequence LIGYYLSEGW…LLILLQLLGI (147 aa).

This sequence belongs to the UDP-glucose/GDP-mannose dehydrogenase family. Post-translationally, this protein undergoes a protein self splicing that involves a post-translational excision of the intervening region (intein) followed by peptide ligation.

This is an uncharacterized protein from Methanocaldococcus jannaschii (strain ATCC 43067 / DSM 2661 / JAL-1 / JCM 10045 / NBRC 100440) (Methanococcus jannaschii).